Reading from the N-terminus, the 381-residue chain is Pentatricopeptide repeat-containing protein 2, mitochondrial (381 aa).

The PPR repeat unit spans residues 157–191; sequence DTTSFNITIDMLFNKQLYESGLEVVGEMKKQGVSL.

This sequence belongs to the PTCD2 family.

Its subcellular location is the mitochondrion. Functionally, involved in mitochondrial RNA maturation and mitochondrial respiratory chain function. The chain is Pentatricopeptide repeat-containing protein 2, mitochondrial (ptcd2) from Danio rerio (Zebrafish).